The sequence spans 115 residues: Parathyroid hormone (115 aa).

A signal peptide spans 1-25 (MMSAKDTVKVMVVMLAICFLARSDG). Positions 26 to 31 (KPIKKR) are excised as a propeptide. The important for receptor binding stretch occupies residues 51–69 (RVEWLRKKLQDVHNFVALG). The segment at 75-98 (RDGGSQRPRKKEDNVLVESHQKSL) is disordered.

It belongs to the parathyroid hormone family. As to quaternary structure, interacts with PTH1R (via N-terminal extracellular domain).

The protein resides in the secreted. In terms of biological role, parathyroid hormone elevates calcium level by dissolving the salts in bone and preventing their renal excretion. Acts by binding to its receptor, PTH1R, activating G protein-coupled receptor signaling. Stimulates [1-14C]-2-deoxy-D-glucose (2DG) transport and glycogen synthesis in osteoblastic cells. The polypeptide is Parathyroid hormone (PTH) (Sus scrofa (Pig)).